We begin with the raw amino-acid sequence, 214 residues long: Outer-membrane lipoprotein carrier protein (214 aa).

An N-terminal signal peptide occupies residues 1-24 (MKIKLAFAVLLALCLSLSVMPVLA).

Belongs to the LolA family. Monomer.

The protein resides in the periplasm. Functionally, participates in the translocation of lipoproteins from the inner membrane to the outer membrane. Only forms a complex with a lipoprotein if the residue after the N-terminal Cys is not an aspartate (The Asp acts as a targeting signal to indicate that the lipoprotein should stay in the inner membrane). The sequence is that of Outer-membrane lipoprotein carrier protein from Alkalilimnicola ehrlichii (strain ATCC BAA-1101 / DSM 17681 / MLHE-1).